A 249-amino-acid polypeptide reads, in one-letter code: Small ribosomal subunit protein uS3 (249 aa).

A KH type-2 domain is found at 39–107 (VRAMLKKRLY…EVHLNIVEIR (69 aa)). Residues 215–249 (LDKRLATESGPAGEGGGRERGDRPDRGDRGRRDRG) form a disordered region. A compositionally biased stretch (basic and acidic residues) spans 230–249 (GGRERGDRPDRGDRGRRDRG).

This sequence belongs to the universal ribosomal protein uS3 family. As to quaternary structure, part of the 30S ribosomal subunit. Forms a tight complex with proteins S10 and S14.

Functionally, binds the lower part of the 30S subunit head. Binds mRNA in the 70S ribosome, positioning it for translation. This is Small ribosomal subunit protein uS3 from Caulobacter sp. (strain K31).